A 264-amino-acid chain; its full sequence is Methionine aminopeptidase (264 aa).

H79 contacts substrate. 3 residues coordinate a divalent metal cation: D97, D108, and H171. H178 contributes to the substrate binding site. Positions 204 and 235 each coordinate a divalent metal cation.

Belongs to the peptidase M24A family. Methionine aminopeptidase type 1 subfamily. As to quaternary structure, monomer. The cofactor is Co(2+). Requires Zn(2+) as cofactor. It depends on Mn(2+) as a cofactor. Fe(2+) serves as cofactor.

It catalyses the reaction Release of N-terminal amino acids, preferentially methionine, from peptides and arylamides.. Functionally, removes the N-terminal methionine from nascent proteins. The N-terminal methionine is often cleaved when the second residue in the primary sequence is small and uncharged (Met-Ala-, Cys, Gly, Pro, Ser, Thr, or Val). Requires deformylation of the N(alpha)-formylated initiator methionine before it can be hydrolyzed. This Salmonella typhi protein is Methionine aminopeptidase.